A 209-amino-acid chain; its full sequence is Uracil phosphoribosyltransferase (209 aa).

Residues Arg-79, Arg-104, and Asp-131 to Ser-139 contribute to the 5-phospho-alpha-D-ribose 1-diphosphate site. Uracil-binding positions include Ile-194 and Gly-199–Ala-201. Asp-200 contacts 5-phospho-alpha-D-ribose 1-diphosphate.

It belongs to the UPRTase family. Requires Mg(2+) as cofactor.

The catalysed reaction is UMP + diphosphate = 5-phospho-alpha-D-ribose 1-diphosphate + uracil. It functions in the pathway pyrimidine metabolism; UMP biosynthesis via salvage pathway; UMP from uracil: step 1/1. Allosterically activated by GTP. Catalyzes the conversion of uracil and 5-phospho-alpha-D-ribose 1-diphosphate (PRPP) to UMP and diphosphate. This is Uracil phosphoribosyltransferase from Geobacillus sp. (strain WCH70).